The primary structure comprises 563 residues: Arginine--tRNA ligase (563 aa).

A 'HIGH' region motif is present at residues 121-131; sequence PNIAKPFSIGH.

Belongs to the class-I aminoacyl-tRNA synthetase family. In terms of assembly, monomer.

It localises to the cytoplasm. The enzyme catalyses tRNA(Arg) + L-arginine + ATP = L-arginyl-tRNA(Arg) + AMP + diphosphate. In Streptococcus mutans serotype c (strain ATCC 700610 / UA159), this protein is Arginine--tRNA ligase.